The primary structure comprises 209 residues: UPF0319 protein VF_1616 (209 aa).

A signal peptide spans Met-1–Ala-21.

It belongs to the UPF0319 family.

In Aliivibrio fischeri (strain ATCC 700601 / ES114) (Vibrio fischeri), this protein is UPF0319 protein VF_1616.